We begin with the raw amino-acid sequence, 100 residues long: MDLTPREKDKMLIFTAGLVAERRLARGVKLNYPEAMAYISAALLEGARDGQTVADLMHYGTTLLTRDQVMEGIPEMIPEIQVEATFPDGTKLVTVHQPIA.

The protein belongs to the urease gamma subunit family. As to quaternary structure, heterotrimer of UreA (gamma), UreB (beta) and UreC (alpha) subunits. Three heterotrimers associate to form the active enzyme.

The protein resides in the cytoplasm. The enzyme catalyses urea + 2 H2O + H(+) = hydrogencarbonate + 2 NH4(+). Its pathway is nitrogen metabolism; urea degradation; CO(2) and NH(3) from urea (urease route): step 1/1. This chain is Urease subunit gamma, found in Pseudomonas syringae pv. tomato (strain ATCC BAA-871 / DC3000).